A 510-amino-acid chain; its full sequence is Abscisic acid 8'-hydroxylase 2 (510 aa).

The helical transmembrane segment at 3-23 (FLLFFVFVTAAVLCFVVPAFL) threads the bilayer. Cys441 is a binding site for heme.

The protein belongs to the cytochrome P450 family. The cofactor is heme.

It is found in the membrane. The enzyme catalyses 2-cis-(+)-abscisate + reduced [NADPH--hemoprotein reductase] + O2 = (+)-8'-hydroxyabscisate + oxidized [NADPH--hemoprotein reductase] + H2O + H(+). It participates in plant hormone degradation; abscisic acid degradation. Involved in the oxidative degradation of abscisic acid. The polypeptide is Abscisic acid 8'-hydroxylase 2 (CYP707A6) (Oryza sativa subsp. japonica (Rice)).